The primary structure comprises 61 residues: MNAKFILLLLVVTTTTLLPDAKGAEIIRCSGTRECYAPCQKLTGCLNAKCMNKACKCYGCV.

Residues Met-1–Gly-23 form the signal peptide. Intrachain disulfides connect Cys-29–Cys-50, Cys-35–Cys-55, Cys-39–Cys-57, and Cys-45–Cys-60.

This sequence belongs to the short scorpion toxin superfamily. Potassium channel inhibitor family. Alpha-KTx 06 subfamily. Expressed by the venom gland.

It localises to the secreted. In terms of biological role, inhibits Kv1.2/KCNA2 and Kv1.3/KCNA3 voltage-gated potassium channels. The chain is Potassium channel toxin alpha-KTx 6.9 from Opistophthalmus carinatus (African yellow leg scorpion).